Here is a 463-residue protein sequence, read N- to C-terminus: MQMQLNAKTVQGAFKAQRPRSVRGNVAVRAVAAPPKLVTKRSEEIFKEAQELLPGGVNSPVRAFRSVGGGPIVFDRVKGAYCWDVDGNKYIDYVGSWGPAICGHGNDEVNNALKAQIDKGTSFGAPCELENVLAKMVIDRVPSVEMVRFVSSGTEACLSVLRLMRAYTGREKVLKFTGCYHGHADSFLVKAGSGVITLGLPDSPGVPKSTAAATLTATYNNLDSVRELFAANKGEIAGVILEPVVGNSGFIVPTKEFLQGLREICTAEGAVLCFDEVMTGFRIAKGCAQEHFGITPDLTTMGKVIGGGMPVGAYGGKKEIMKMVAPAGPMYQAGTLSGNPMAMTAGIKTLEILGRPGAYEHLEKVTKRLIDGIMAAAKEHSHEITGGNISGMFGFFFCKGPVTCFEDALAADTAKFARFHRGMLEEGVYLAPSQFEAGFTSLAHSEADVDATIAAARRVFARI.

The transit peptide at 1 to 30 (MQMQLNAKTVQGAFKAQRPRSVRGNVAVRA) directs the protein to the chloroplast. Position 303 is an N6-(pyridoxal phosphate)lysine (K303).

This sequence belongs to the class-III pyridoxal-phosphate-dependent aminotransferase family. HemL subfamily. Homodimer. Pyridoxal 5'-phosphate serves as cofactor.

It is found in the plastid. It localises to the chloroplast. The enzyme catalyses (S)-4-amino-5-oxopentanoate = 5-aminolevulinate. It functions in the pathway porphyrin-containing compound metabolism; protoporphyrin-IX biosynthesis; 5-aminolevulinate from L-glutamyl-tRNA(Glu): step 2/2. Its pathway is porphyrin-containing compound metabolism; chlorophyll biosynthesis. The protein is Glutamate-1-semialdehyde 2,1-aminomutase, chloroplastic (GSA) of Chlamydomonas reinhardtii (Chlamydomonas smithii).